The following is a 441-amino-acid chain: Aminopeptidase C (441 aa).

Catalysis depends on residues Cys70, His361, and Asn382.

The protein belongs to the peptidase C1 family.

The catalysed reaction is Inactivates bleomycin B2 (a cytotoxic glycometallopeptide) by hydrolysis of a carboxyamide bond of beta-aminoalanine, but also shows general aminopeptidase activity. The specificity varies somewhat with source, but amino acid arylamides of Met, Leu and Ala are preferred.. This Listeria monocytogenes serovar 1/2a (strain ATCC BAA-679 / EGD-e) protein is Aminopeptidase C (pepC).